We begin with the raw amino-acid sequence, 257 residues long: Transmembrane protein 101 (257 aa).

8 helical membrane passes run Val21–Glu40, Val52–Gly72, Trp77–Gly97, Tyr110–Leu130, Ser139–Leu159, Leu182–Leu202, Ile206–His226, and Phe233–Leu253.

It is found in the membrane. In terms of biological role, may activate NF-kappa-B signaling pathways. The chain is Transmembrane protein 101 (TMEM101) from Pongo abelii (Sumatran orangutan).